The primary structure comprises 364 residues: DNA polymerase IV (364 aa).

The UmuC domain occupies 8–189; that stretch reads IIHIDMDCYF…LPLTKIPGVG (182 aa). 2 residues coordinate Mg(2+): Asp12 and Asp107. Glu108 is a catalytic residue.

Belongs to the DNA polymerase type-Y family. Monomer. Requires Mg(2+) as cofactor.

Its subcellular location is the cytoplasm. It catalyses the reaction DNA(n) + a 2'-deoxyribonucleoside 5'-triphosphate = DNA(n+1) + diphosphate. Its function is as follows. Poorly processive, error-prone DNA polymerase involved in untargeted mutagenesis. Copies undamaged DNA at stalled replication forks, which arise in vivo from mismatched or misaligned primer ends. These misaligned primers can be extended by PolIV. Exhibits no 3'-5' exonuclease (proofreading) activity. May be involved in translesional synthesis, in conjunction with the beta clamp from PolIII. This chain is DNA polymerase IV, found in Shewanella woodyi (strain ATCC 51908 / MS32).